Consider the following 443-residue polypeptide: Glucose-6-phosphate isomerase (443 aa).

The active-site Proton donor is the Glu-285. Residues His-306 and Lys-420 contribute to the active site.

Belongs to the GPI family.

The protein localises to the cytoplasm. The enzyme catalyses alpha-D-glucose 6-phosphate = beta-D-fructose 6-phosphate. Its pathway is carbohydrate biosynthesis; gluconeogenesis. It functions in the pathway carbohydrate degradation; glycolysis; D-glyceraldehyde 3-phosphate and glycerone phosphate from D-glucose: step 2/4. Catalyzes the reversible isomerization of glucose-6-phosphate to fructose-6-phosphate. The polypeptide is Glucose-6-phosphate isomerase (Staphylococcus epidermidis (strain ATCC 12228 / FDA PCI 1200)).